A 250-amino-acid chain; its full sequence is Kv channel-interacting protein 4 (250 aa).

A KIS region spans residues 2-44; that stretch reads NVRRVESISAQLEEASSTGGFLYAQNNTKRSIKERLMKLLPCS. S17 and S56 each carry phosphoserine. An EF-hand 1; degenerate domain is found at 61–117; that stretch reads LEMATVRHRPEALELLEAQSKFTKKELQILYRGFKNECPSGVVNEETFKEIYSQFFP. EF-hand domains are found at residues 120 to 155, 156 to 191, and 204 to 239; these read DSTT…LLRG, TVQE…IYDM, and APRQ…DENI. Ca(2+) contacts are provided by D133, D135, N137, D144, D169, N171, D173, Y175, E180, D217, N219, D221, and E228. Positions 237-250 are interaction with KCND2; it reads ENIMRSMQLFENVI.

This sequence belongs to the recoverin family. Component of heteromultimeric potassium channels. Identified in potassium channel complexes containing KCND1, KCND2, KCND3, KCNIP1, KCNIP2, KCNIP3, KCNIP4, DPP6 and DPP10. Interacts with the C-terminus of PSEN2 and probably PSEN1. Interacts with KCND2 and KCND3. As to expression, expressed in brain. Highly expressed by neurons in layers II-IV of cortex and in hippocampus, thalamus and the Purkinje cell layer of the cerebellum.

It localises to the cell membrane. The protein localises to the cytoplasm. It is found in the peroxisome. Its function is as follows. Regulatory subunit of Kv4/D (Shal)-type voltage-gated rapidly inactivating A-type potassium channels, such as KCND2/Kv4.2 and KCND3/Kv4.3. Modulates channel expression at the cell membrane, gating characteristics, inactivation kinetics and rate of recovery from inactivation in a calcium-dependent and isoform-specific manner. This Mus musculus (Mouse) protein is Kv channel-interacting protein 4 (Kcnip4).